We begin with the raw amino-acid sequence, 369 residues long: UPF0284 protein sll1500 (369 aa).

This sequence belongs to the UPF0284 family.

This chain is UPF0284 protein sll1500, found in Synechocystis sp. (strain ATCC 27184 / PCC 6803 / Kazusa).